Here is a 295-residue protein sequence, read N- to C-terminus: Transcriptional regulator SirC (295 aa).

Residues 195-292 enclose the HTH araC/xylS-type domain; the sequence is EKVYNIIISD…KITPLSFMRT (98 aa). DNA-binding regions (H-T-H motif) lie at residues 212 to 233 and 259 to 282; these read AEVAGKLFMSVSSLKRKLAAEE and ISQVATMCGYDTPSYFIAIFKRHF.

In terms of biological role, positive regulator of the expression of the invasion-associated type III secretion system encoded within SPI-1 (pathogenicity island 1). This chain is Transcriptional regulator SirC (sirC), found in Salmonella typhi.